The sequence spans 224 residues: Cutinase 1 (224 aa).

Residues 1–16 (MKFLSVLSLAITLAAA) form the signal peptide. A disulfide bond links Cys-46 and Cys-125. Ser-136 functions as the Nucleophile in the catalytic mechanism. Cys-187 and Cys-194 form a disulfide bridge. Asp-191 is an active-site residue. The active-site Proton donor/acceptor is His-204.

Belongs to the cutinase family. Post-translationally, the 2 disulfide bonds play a critical role in holding the catalytic residues in juxta-position; reduction of the disulfide bridges results in the complete inactivation of the enzyme. In terms of processing, the N-terminus is blocked.

It is found in the secreted. It carries out the reaction cutin + H2O = cutin monomers.. With respect to regulation, inhibited by diisopropyl fluorophosphate (DFP). Functionally, catalyzes the hydrolysis of complex carboxylic polyesters found in the cell wall of plants. Degrades cutin, a macromolecule that forms the structure of the plant cuticle. Allows pathogenic fungi to penetrate through the cuticular barrier into the host plant during the initial stage of fungal infection. This chain is Cutinase 1 (CUTA), found in Colletotrichum gloeosporioides (Anthracnose fungus).